The chain runs to 191 residues: Signal peptidase IB (191 aa).

The Cytoplasmic portion of the chain corresponds to 1 to 7 (MKKELLE). A helical membrane pass occupies residues 8–28 (WIISIAVAFVILFIVGKFIVT). Residues 29 to 191 (PYTIKGESMD…YNFNPENTKN (163 aa)) are Extracellular-facing. Catalysis depends on residues S36 and K77.

It belongs to the peptidase S26 family.

Its subcellular location is the cell membrane. The enzyme catalyses Cleavage of hydrophobic, N-terminal signal or leader sequences from secreted and periplasmic proteins.. Functionally, essential for cell viability. This chain is Signal peptidase IB (spsB), found in Staphylococcus aureus (strain MRSA252).